Here is a 285-residue protein sequence, read N- to C-terminus: 2,4-didehydro-3-deoxy-L-rhamnonate hydrolase (285 aa).

Position 73 (leucine 73) interacts with pyruvate. Mg(2+) contacts are provided by glutamate 119, glutamate 121, and aspartate 150. Pyruvate contacts are provided by lysine 168 and threonine 238.

It belongs to the FAH family. As to quaternary structure, homodimer. The cofactor is Mg(2+).

The enzyme catalyses 2,4-didehydro-3-deoxy-L-rhamnonate + H2O = (S)-lactate + pyruvate + H(+). It functions in the pathway carbohydrate degradation; L-rhamnose degradation. Its function is as follows. Hydrolase that catalyzes the hydrolysis of 2,4-didehydro-3-deoxy-L-rhamnonate to pyruvate and L-lactate. Can also hydrolyze L-2,4-diketo-3-deoxylyxonate and L-2,4-diketo-3-deoxymannonate. In vitro can also use acylpyruvates such as acetylpyruvate and trimethylacetopyruvate. Catalyzes the fifth (last) step in an alternative pathway for rhamnose utilization that does not involve phosphorylated intermediates. In Sphingomonas sp. (strain SKA58), this protein is 2,4-didehydro-3-deoxy-L-rhamnonate hydrolase.